The following is a 272-amino-acid chain: Insulin-like growth factor-binding protein 1 (272 aa).

The N-terminal stretch at M1–S25 is a signal peptide. The IGFBP N-terminal domain maps to Q28–E109. Intrachain disulfides connect C32–C59, C35–C61, C43–C62, C50–C65, and C73–C86. A phosphoserine mark is found at S139, S157, and S169. Phosphothreonine is present on T170. Position 171 is a phosphotyrosine (Y171). The region spanning K186–C264 is the Thyroglobulin type-1 domain. 3 disulfides stabilise this stretch: C189–C219, C230–C241, and C243–C264. S255 is modified (phosphoserine). Residues R259–D261 carry the Cell attachment site motif.

As to quaternary structure, binds equally well IGF1 and IGF2. Interacts with integrin ITGA5:ITGB1. Interacts with VHL; this interaction inhibits HIF1A degradation.

The protein localises to the secreted. Multifunctional protein that plays a critical role in regulating the availability of IGFs such as IGF1 and IGF2 to their receptors and thereby regulates IGF-mediated cellular processes including cell migration, proliferation, differentiation or apoptosis in a cell-type specific manner. Also plays a positive role in cell migration by interacting with integrin ITGA5:ITGB1 through its RGD motif. Mechanistically, binding to integrins leads to activation of focal adhesion kinase/PTK2 and stimulation of the mitogen-activated protein kinase (MAPK) pathway. Regulates cardiomyocyte apoptosis by suppressing HIF-1alpha/HIF1A degradation through ubiquitination. The sequence is that of Insulin-like growth factor-binding protein 1 (IGFBP1) from Ictidomys tridecemlineatus (Thirteen-lined ground squirrel).